The primary structure comprises 31 residues: Nemertide alpha-6 (31 aa).

Intrachain disulfides connect cysteine 2/cysteine 16, cysteine 9/cysteine 20, and cysteine 15/cysteine 26. 4-hydroxyproline is present on residues proline 28 and proline 29.

It belongs to the nemertide family. As to expression, confined to the epidermis and to the mucus layer.

It localises to the secreted. Highly potent toxin against both insect and some mammalian sodium channels (Nav). It potently inhibits inactivation of insect sodium channels of B.germanica (BgNav1) (EC(50)=2.6 nM) and also delays the inactivation of mammalian Nav with potent activity on Nav1.1/SCN1A (hNav1.1/SCN1A; EC(50)=7.9 nM, rNav1.2/SCN2A; EC(50)=24.3 nM, rNav1.3/SCN3A; EC(50)=105.6 nM, rNav1.4/SCN4A; EC(50)=46.4 nM, hNav1.5/SCN5A; EC(50)=215.2 nM, mNav1.6/SCN8A; EC(50)=36.3 nM, hNav1.9/SCN9A; EC(50)=97.2 nM). 1 uM is enough to completely inhibits the inactivation, resulting in sustained non-inactivating currents. In addition, the toxin significantly enhances the recovery from inactivation, and the open state is not required for the toxin to interact with the channel. In vivo, injection into brine shrimp (Artemia salina) stops movement or causes death after 24 hours (EC(50)=2.8 uM). This Lineus sanguineus (Ribbon worm) protein is Nemertide alpha-6.